Consider the following 302-residue polypeptide: Catechol 1,2-dioxygenase (302 aa).

Fe cation-binding residues include Tyr-164, Tyr-198, His-222, and His-224.

It belongs to the intradiol ring-cleavage dioxygenase family. It depends on Fe(3+) as a cofactor.

It catalyses the reaction catechol + O2 = cis,cis-muconate + 2 H(+). It functions in the pathway aromatic compound metabolism; beta-ketoadipate pathway; 5-oxo-4,5-dihydro-2-furylacetate from catechol: step 1/3. This is Catechol 1,2-dioxygenase (pheB) from Pseudomonas sp. (strain EST1001).